Reading from the N-terminus, the 174-residue chain is Protein GrpE (174 aa).

Belongs to the GrpE family. In terms of assembly, homodimer.

The protein localises to the cytoplasm. Functionally, participates actively in the response to hyperosmotic and heat shock by preventing the aggregation of stress-denatured proteins, in association with DnaK and GrpE. It is the nucleotide exchange factor for DnaK and may function as a thermosensor. Unfolded proteins bind initially to DnaJ; upon interaction with the DnaJ-bound protein, DnaK hydrolyzes its bound ATP, resulting in the formation of a stable complex. GrpE releases ADP from DnaK; ATP binding to DnaK triggers the release of the substrate protein, thus completing the reaction cycle. Several rounds of ATP-dependent interactions between DnaJ, DnaK and GrpE are required for fully efficient folding. The chain is Protein GrpE from Pseudothermotoga lettingae (strain ATCC BAA-301 / DSM 14385 / NBRC 107922 / TMO) (Thermotoga lettingae).